Reading from the N-terminus, the 559-residue chain is Chromatin assembly factor 1 subunit B (559 aa).

WD repeat units follow at residues 11–54 (HNKE…DGKA), 64–103 (RHTKAVNVVRFSPTGEILASGGDDAVILLWKVNDNKEPEQ), 127–166 (GHLEDVYDICWATDGNLMASASVDNTAIIWDVSKGQKISI), 169–208 (EHKSYVQGVTWDPLGQYVATLSCDRVLRVYSIQKKRVAFN), 228–279 (FHDD…RPIA), 299–340 (ELRP…PFGY), and 344–385 (IHYH…IPLK). The tract at residues 386–559 (EKPVLNMRTP…NKGGTESLDP (174 aa)) is disordered. Threonine 394 bears the Phosphothreonine mark. The residue at position 409 (serine 409) is a Phosphoserine. Residue threonine 419 is modified to Phosphothreonine. Serine 429 is modified (phosphoserine). Residues 430-444 (PGTTPPQARQAPAPT) show a composition bias toward low complexity. Phosphothreonine is present on threonine 433. Residue serine 458 is modified to Phosphoserine. Positions 469-495 (LQPSSQNTKAHPSRRVTLNTLQAWSKT) are enriched in polar residues. N6-acetyllysine is present on lysine 494. A phosphothreonine mark is found at threonine 495, threonine 509, threonine 521, and threonine 531. Over residues 509–526 (TPPSSVPTSVISTPSTEE) the composition is skewed to low complexity. At serine 538 the chain carries Phosphoserine. The segment covering 541–552 (ELKRPRLDENKG) has biased composition (basic and acidic residues).

The protein belongs to the WD repeat HIR1 family. In terms of assembly, subunit of the CAF-1 complex that contains RBBP4, CHAF1B and CHAF1A. CHAF1A binds directly to CHAF1B. Only minor amounts of RBBP4 are complexed with CHAF1A and CHAF1B in G1 phase. In G2 and S phase also monomeric CHAF1B is detected. Interacts with histones H3.1, H3.2 and H3.1t. Differentially phosphorylated during cell cycle. During mitosis the p60 subunit of inactive CAF-1 is hyperphosphorylated and displaced into the cytosol. Progressivly dephosphorylated from G1 to S and G2 phase. Phosphorylated p60 is recruited to chromatin undergoing DNA repair after UV irradiation in G1, S or G2 phases.

The protein resides in the nucleus. It localises to the cytoplasm. Its function is as follows. Acts as a component of the histone chaperone complex chromatin assembly factor 1 (CAF-1), which assembles histone octamers onto DNA during replication and repair. CAF-1 performs the first step of the nucleosome assembly process, bringing newly synthesized histones H3 and H4 to replicating DNA; histones H2A/H2B can bind to this chromatin precursor subsequent to DNA replication to complete the histone octamer. The sequence is that of Chromatin assembly factor 1 subunit B from Homo sapiens (Human).